We begin with the raw amino-acid sequence, 152 residues long: Xanthine-guanine phosphoribosyltransferase (152 aa).

5-phospho-alpha-D-ribose 1-diphosphate is bound by residues 37–38 (RG), R69, and 88–96 (DDLVDTGGT). R69 lines the GMP pocket. Mg(2+) is bound at residue D89. D92 and I135 together coordinate guanine. The xanthine site is built by D92 and I135. GMP contacts are provided by residues 92-96 (DTGGT) and 134-135 (WI).

The protein belongs to the purine/pyrimidine phosphoribosyltransferase family. XGPT subfamily. As to quaternary structure, homotetramer. It depends on Mg(2+) as a cofactor.

The protein resides in the cell inner membrane. The catalysed reaction is GMP + diphosphate = guanine + 5-phospho-alpha-D-ribose 1-diphosphate. The enzyme catalyses XMP + diphosphate = xanthine + 5-phospho-alpha-D-ribose 1-diphosphate. It catalyses the reaction IMP + diphosphate = hypoxanthine + 5-phospho-alpha-D-ribose 1-diphosphate. It functions in the pathway purine metabolism; GMP biosynthesis via salvage pathway; GMP from guanine: step 1/1. Its pathway is purine metabolism; XMP biosynthesis via salvage pathway; XMP from xanthine: step 1/1. Functionally, purine salvage pathway enzyme that catalyzes the transfer of the ribosyl-5-phosphate group from 5-phospho-alpha-D-ribose 1-diphosphate (PRPP) to the N9 position of the 6-oxopurines guanine and xanthine to form the corresponding ribonucleotides GMP (guanosine 5'-monophosphate) and XMP (xanthosine 5'-monophosphate), with the release of PPi. To a lesser extent, also acts on hypoxanthine. This chain is Xanthine-guanine phosphoribosyltransferase, found in Edwardsiella ictaluri (strain 93-146).